Here is a 946-residue protein sequence, read N- to C-terminus: Bifunctional glutamine synthetase adenylyltransferase/adenylyl-removing enzyme (946 aa).

The tract at residues M1–E440 is adenylyl removase. The interval S449–E946 is adenylyl transferase.

Belongs to the GlnE family. Requires Mg(2+) as cofactor.

The enzyme catalyses [glutamine synthetase]-O(4)-(5'-adenylyl)-L-tyrosine + phosphate = [glutamine synthetase]-L-tyrosine + ADP. The catalysed reaction is [glutamine synthetase]-L-tyrosine + ATP = [glutamine synthetase]-O(4)-(5'-adenylyl)-L-tyrosine + diphosphate. Its function is as follows. Involved in the regulation of glutamine synthetase GlnA, a key enzyme in the process to assimilate ammonia. When cellular nitrogen levels are high, the C-terminal adenylyl transferase (AT) inactivates GlnA by covalent transfer of an adenylyl group from ATP to specific tyrosine residue of GlnA, thus reducing its activity. Conversely, when nitrogen levels are low, the N-terminal adenylyl removase (AR) activates GlnA by removing the adenylyl group by phosphorolysis, increasing its activity. The regulatory region of GlnE binds the signal transduction protein PII (GlnB) which indicates the nitrogen status of the cell. The protein is Bifunctional glutamine synthetase adenylyltransferase/adenylyl-removing enzyme of Escherichia coli O127:H6 (strain E2348/69 / EPEC).